Here is a 637-residue protein sequence, read N- to C-terminus: tRNA uridine 5-carboxymethylaminomethyl modification enzyme MnmG (637 aa).

Residue 18–23 (GAGHAG) coordinates FAD. Position 282–296 (282–296 (GPRYCPSIEDKIVRF)) interacts with NAD(+).

The protein belongs to the MnmG family. In terms of assembly, homodimer. Heterotetramer of two MnmE and two MnmG subunits. The cofactor is FAD.

It localises to the cytoplasm. NAD-binding protein involved in the addition of a carboxymethylaminomethyl (cmnm) group at the wobble position (U34) of certain tRNAs, forming tRNA-cmnm(5)s(2)U34. The sequence is that of tRNA uridine 5-carboxymethylaminomethyl modification enzyme MnmG from Pediococcus pentosaceus (strain ATCC 25745 / CCUG 21536 / LMG 10740 / 183-1w).